A 427-amino-acid chain; its full sequence is Serine--tRNA ligase (427 aa).

236 to 238 (TAE) is a binding site for L-serine. 267 to 269 (RRE) contacts ATP. Glu290 contributes to the L-serine binding site. ATP is bound at residue 354–357 (EISS). Ser390 contacts L-serine.

This sequence belongs to the class-II aminoacyl-tRNA synthetase family. Type-1 seryl-tRNA synthetase subfamily. In terms of assembly, homodimer. The tRNA molecule binds across the dimer.

It is found in the cytoplasm. The catalysed reaction is tRNA(Ser) + L-serine + ATP = L-seryl-tRNA(Ser) + AMP + diphosphate + H(+). The enzyme catalyses tRNA(Sec) + L-serine + ATP = L-seryl-tRNA(Sec) + AMP + diphosphate + H(+). It participates in aminoacyl-tRNA biosynthesis; selenocysteinyl-tRNA(Sec) biosynthesis; L-seryl-tRNA(Sec) from L-serine and tRNA(Sec): step 1/1. Its function is as follows. Catalyzes the attachment of serine to tRNA(Ser). Is also able to aminoacylate tRNA(Sec) with serine, to form the misacylated tRNA L-seryl-tRNA(Sec), which will be further converted into selenocysteinyl-tRNA(Sec). The protein is Serine--tRNA ligase of Rippkaea orientalis (strain PCC 8801 / RF-1) (Cyanothece sp. (strain PCC 8801)).